The following is a 140-amino-acid chain: uncharacterized protein (140 aa).

It localises to the mitochondrion. This is an uncharacterized protein from Homo sapiens (Human).